The sequence spans 65 residues: Large ribosomal subunit protein uL29 (65 aa).

Belongs to the universal ribosomal protein uL29 family.

The sequence is that of Large ribosomal subunit protein uL29 from Acidovorax ebreus (strain TPSY) (Diaphorobacter sp. (strain TPSY)).